The chain runs to 282 residues: Phosphatidylserine decarboxylase proenzyme (282 aa).

Active-site charge relay system; for autoendoproteolytic cleavage activity residues include D88, H144, and S247. Residue S247 is the Schiff-base intermediate with substrate; via pyruvic acid; for decarboxylase activity of the active site. S247 is subject to Pyruvic acid (Ser); by autocatalysis.

The protein belongs to the phosphatidylserine decarboxylase family. PSD-B subfamily. Prokaryotic type I sub-subfamily. Heterodimer of a large membrane-associated beta subunit and a small pyruvoyl-containing alpha subunit. Pyruvate is required as a cofactor. In terms of processing, is synthesized initially as an inactive proenzyme. Formation of the active enzyme involves a self-maturation process in which the active site pyruvoyl group is generated from an internal serine residue via an autocatalytic post-translational modification. Two non-identical subunits are generated from the proenzyme in this reaction, and the pyruvate is formed at the N-terminus of the alpha chain, which is derived from the carboxyl end of the proenzyme. The autoendoproteolytic cleavage occurs by a canonical serine protease mechanism, in which the side chain hydroxyl group of the serine supplies its oxygen atom to form the C-terminus of the beta chain, while the remainder of the serine residue undergoes an oxidative deamination to produce ammonia and the pyruvoyl prosthetic group on the alpha chain. During this reaction, the Ser that is part of the protease active site of the proenzyme becomes the pyruvoyl prosthetic group, which constitutes an essential element of the active site of the mature decarboxylase.

The protein resides in the cell membrane. It carries out the reaction a 1,2-diacyl-sn-glycero-3-phospho-L-serine + H(+) = a 1,2-diacyl-sn-glycero-3-phosphoethanolamine + CO2. The protein operates within phospholipid metabolism; phosphatidylethanolamine biosynthesis; phosphatidylethanolamine from CDP-diacylglycerol: step 2/2. Functionally, catalyzes the formation of phosphatidylethanolamine (PtdEtn) from phosphatidylserine (PtdSer). The polypeptide is Phosphatidylserine decarboxylase proenzyme (Xanthomonas oryzae pv. oryzae (strain MAFF 311018)).